A 444-amino-acid chain; its full sequence is tRNA-2-methylthio-N(6)-dimethylallyladenosine synthase (444 aa).

Positions 2 to 119 (KKVYIKTFGC…LPDLIESRKQ (118 aa)) constitute an MTTase N-terminal domain. Residues C11, C48, C82, C156, C160, and C163 each contribute to the [4Fe-4S] cluster site. Residues 142–374 (KVDGGAAFVS…NEVIEAKGYA (233 aa)) form the Radical SAM core domain. The 64-residue stretch at 377 to 440 (QSMVGTVQRV…PHSLAGEALT (64 aa)) folds into the TRAM domain.

Belongs to the methylthiotransferase family. MiaB subfamily. As to quaternary structure, monomer. Requires [4Fe-4S] cluster as cofactor.

It is found in the cytoplasm. The catalysed reaction is N(6)-dimethylallyladenosine(37) in tRNA + (sulfur carrier)-SH + AH2 + 2 S-adenosyl-L-methionine = 2-methylsulfanyl-N(6)-dimethylallyladenosine(37) in tRNA + (sulfur carrier)-H + 5'-deoxyadenosine + L-methionine + A + S-adenosyl-L-homocysteine + 2 H(+). Its function is as follows. Catalyzes the methylthiolation of N6-(dimethylallyl)adenosine (i(6)A), leading to the formation of 2-methylthio-N6-(dimethylallyl)adenosine (ms(2)i(6)A) at position 37 in tRNAs that read codons beginning with uridine. This is tRNA-2-methylthio-N(6)-dimethylallyladenosine synthase from Chromobacterium violaceum (strain ATCC 12472 / DSM 30191 / JCM 1249 / CCUG 213 / NBRC 12614 / NCIMB 9131 / NCTC 9757 / MK).